The chain runs to 249 residues: MADPVEQFEIHKIFSLGHIGGQEIAFTNSSLYMLLAVGAVALLMLGGSAGRRLVPTRFQSMAELSYEFVVNMVRESLGEEGMKFFPLVFSIFMFVLMANLIGVIPYTFSVTSHLIVTVALALIVFLTVLLYGLYKNGLKFFRVFVPSGVPIYILPLIAMIEVISFLSRPVSHSVRLFANMLAGHITLKVFASFVTSLGALGVAGIAGAALPLAMTTAISILEVLVALLQAYVFAILTCIYLNDALHPGH.

6 helical membrane passes run Ser-30 to Gly-50, Phe-84 to Ile-104, Leu-114 to Tyr-134, Val-143 to Ile-163, Phe-193 to Ala-213, and Ile-220 to Tyr-240.

The protein belongs to the ATPase A chain family. In terms of assembly, F-type ATPases have 2 components, CF(1) - the catalytic core - and CF(0) - the membrane proton channel. CF(1) has five subunits: alpha(3), beta(3), gamma(1), delta(1), epsilon(1). CF(0) has three main subunits: a(1), b(2) and c(9-12). The alpha and beta chains form an alternating ring which encloses part of the gamma chain. CF(1) is attached to CF(0) by a central stalk formed by the gamma and epsilon chains, while a peripheral stalk is formed by the delta and b chains.

The protein resides in the cell inner membrane. In terms of biological role, key component of the proton channel; it plays a direct role in the translocation of protons across the membrane. In Afipia carboxidovorans (strain ATCC 49405 / DSM 1227 / KCTC 32145 / OM5) (Oligotropha carboxidovorans), this protein is ATP synthase subunit a.